Here is a 413-residue protein sequence, read N- to C-terminus: Gamma-glutamyl phosphate reductase (413 aa).

The protein belongs to the gamma-glutamyl phosphate reductase family.

The protein resides in the cytoplasm. It catalyses the reaction L-glutamate 5-semialdehyde + phosphate + NADP(+) = L-glutamyl 5-phosphate + NADPH + H(+). It functions in the pathway amino-acid biosynthesis; L-proline biosynthesis; L-glutamate 5-semialdehyde from L-glutamate: step 2/2. Its function is as follows. Catalyzes the NADPH-dependent reduction of L-glutamate 5-phosphate into L-glutamate 5-semialdehyde and phosphate. The product spontaneously undergoes cyclization to form 1-pyrroline-5-carboxylate. This is Gamma-glutamyl phosphate reductase from Rhodococcus jostii (strain RHA1).